The following is a 540-amino-acid chain: Chaperonin GroEL (540 aa).

Residues 30-33, lysine 51, 87-91, glycine 415, 479-481, and aspartate 495 contribute to the ATP site; these read TLGP, DGTTT, and NAA.

Belongs to the chaperonin (HSP60) family. Forms a cylinder of 14 subunits composed of two heptameric rings stacked back-to-back. Interacts with the co-chaperonin GroES.

The protein localises to the cytoplasm. It catalyses the reaction ATP + H2O + a folded polypeptide = ADP + phosphate + an unfolded polypeptide.. In terms of biological role, together with its co-chaperonin GroES, plays an essential role in assisting protein folding. The GroEL-GroES system forms a nano-cage that allows encapsulation of the non-native substrate proteins and provides a physical environment optimized to promote and accelerate protein folding. This Raoultella planticola (Klebsiella planticola) protein is Chaperonin GroEL.